The chain runs to 122 residues: Large ribosomal subunit protein uL14c (122 aa).

The protein belongs to the universal ribosomal protein uL14 family. Part of the 50S ribosomal subunit.

It is found in the plastid. The protein localises to the chloroplast. Binds to 23S rRNA. The chain is Large ribosomal subunit protein uL14c from Populus trichocarpa (Western balsam poplar).